The primary structure comprises 209 residues: Inorganic pyrophosphatase (209 aa).

Positions 38, 52, and 64 each coordinate substrate. The Mg(2+) site is built by D92, D97, and D130. Y167 is a binding site for substrate.

Belongs to the PPase family. In terms of assembly, homohexamer. Requires Mg(2+) as cofactor.

It localises to the cytoplasm. The catalysed reaction is diphosphate + H2O = 2 phosphate + H(+). Catalyzes the hydrolysis of inorganic pyrophosphate (PPi) forming two phosphate ions. The protein is Inorganic pyrophosphatase of Chlamydia trachomatis serovar L2 (strain ATCC VR-902B / DSM 19102 / 434/Bu).